Consider the following 413-residue polypeptide: Gamma-glutamyl phosphate reductase (413 aa).

Belongs to the gamma-glutamyl phosphate reductase family.

The protein resides in the cytoplasm. It carries out the reaction L-glutamate 5-semialdehyde + phosphate + NADP(+) = L-glutamyl 5-phosphate + NADPH + H(+). Its pathway is amino-acid biosynthesis; L-proline biosynthesis; L-glutamate 5-semialdehyde from L-glutamate: step 2/2. In terms of biological role, catalyzes the NADPH-dependent reduction of L-glutamate 5-phosphate into L-glutamate 5-semialdehyde and phosphate. The product spontaneously undergoes cyclization to form 1-pyrroline-5-carboxylate. This Alkaliphilus oremlandii (strain OhILAs) (Clostridium oremlandii (strain OhILAs)) protein is Gamma-glutamyl phosphate reductase.